Reading from the N-terminus, the 344-residue chain is Glyceraldehyde-3-phosphate dehydrogenase (344 aa).

NAD(+) is bound by residues threonine 11–isoleucine 12 and glycine 110. Serine 139–asparagine 141 is a binding site for D-glyceraldehyde 3-phosphate. The active-site Nucleophile is the cysteine 140. Residue arginine 169 coordinates NAD(+). Histidine 195–glycine 196 contributes to the D-glyceraldehyde 3-phosphate binding site. Position 302 (glutamine 302) interacts with NAD(+).

It belongs to the glyceraldehyde-3-phosphate dehydrogenase family. Homotetramer.

It localises to the cytoplasm. It carries out the reaction D-glyceraldehyde 3-phosphate + phosphate + NADP(+) = (2R)-3-phospho-glyceroyl phosphate + NADPH + H(+). The enzyme catalyses D-glyceraldehyde 3-phosphate + phosphate + NAD(+) = (2R)-3-phospho-glyceroyl phosphate + NADH + H(+). The protein operates within carbohydrate degradation; glycolysis; pyruvate from D-glyceraldehyde 3-phosphate: step 1/5. This Pyrobaculum neutrophilum (strain DSM 2338 / JCM 9278 / NBRC 100436 / V24Sta) (Thermoproteus neutrophilus) protein is Glyceraldehyde-3-phosphate dehydrogenase.